A 157-amino-acid chain; its full sequence is SsrA-binding protein (157 aa).

The segment at 126-157 is disordered; it reads GLGKGKQAHDKREAVKERDWQRDRARLMRDRG. Positions 132–157 are enriched in basic and acidic residues; the sequence is QAHDKREAVKERDWQRDRARLMRDRG.

It belongs to the SmpB family.

It is found in the cytoplasm. Required for rescue of stalled ribosomes mediated by trans-translation. Binds to transfer-messenger RNA (tmRNA), required for stable association of tmRNA with ribosomes. tmRNA and SmpB together mimic tRNA shape, replacing the anticodon stem-loop with SmpB. tmRNA is encoded by the ssrA gene; the 2 termini fold to resemble tRNA(Ala) and it encodes a 'tag peptide', a short internal open reading frame. During trans-translation Ala-aminoacylated tmRNA acts like a tRNA, entering the A-site of stalled ribosomes, displacing the stalled mRNA. The ribosome then switches to translate the ORF on the tmRNA; the nascent peptide is terminated with the 'tag peptide' encoded by the tmRNA and targeted for degradation. The ribosome is freed to recommence translation, which seems to be the essential function of trans-translation. The protein is SsrA-binding protein of Methylobacterium radiotolerans (strain ATCC 27329 / DSM 1819 / JCM 2831 / NBRC 15690 / NCIMB 10815 / 0-1).